The chain runs to 1203 residues: Metabotropic glutamate receptor 5 (1203 aa).

The N-terminal stretch at 1 to 20 (MVLLLILSVLLLKEDVRGSA) is a signal peptide. Residues 21–579 (QSSERRVVAH…QYLRWGDPEP (559 aa)) are Extracellular-facing. Cys57 and Cys99 are joined by a disulfide. Residue Tyr64 coordinates L-glutamate. N-linked (GlcNAc...) asparagine glycosylation occurs at Asn88. Residues Ser151 and 172-174 (SAT) each bind L-glutamate. N-linked (GlcNAc...) asparagine glycosylation occurs at Asn209. Tyr222 lines the L-glutamate pocket. 8 disulfides stabilise this stretch: Cys240/Cys529, Cys275/Cys277, Cys364/Cys380, Cys418/Cys425, Cys510/Cys530, Cys514/Cys533, Cys536/Cys548, and Cys551/Cys564. Asp304 is an L-glutamate binding site. Asn377 and Asn381 each carry an N-linked (GlcNAc...) asparagine glycan. Lys395 is an L-glutamate binding site. Asn444 carries N-linked (GlcNAc...) asparagine glycosylation. Residues 580–602 (IAAVVFACLGLLATLFVTVIFII) traverse the membrane as a helical segment. The Cytoplasmic portion of the chain corresponds to 603 to 612 (YRDTPVVKSS). A helical membrane pass occupies residues 613-635 (SRELCYIILAGICLGYLCTFCLI). Topologically, residues 636–643 (AKPKQIYC) are extracellular. A disulfide bridge connects residues Cys643 and Cys732. Residues 644 to 666 (YLQRIGIGLSPAMSYSALVTKTN) form a helical membrane-spanning segment. Residues 667 to 692 (RIARILAGSKKKICTKKPRFMSACAQ) are Cytoplasmic-facing. A helical transmembrane segment spans residues 693–713 (LVIAFILICIQLGIIVALFIM). Residues 714–736 (EPPDIMHDYPSIREVYLICNTTN) lie on the Extracellular side of the membrane. N-linked (GlcNAc...) asparagine glycosylation is present at Asn733. The helical transmembrane segment at 737 to 758 (LGVVTPLGYNGLLILSCTFYAF) threads the bilayer. The Cytoplasmic portion of the chain corresponds to 759-771 (KTRNVPANFNEAK). A helical transmembrane segment spans residues 772–794 (YIAFTMYTTCIIWLAFVPIYFGS). At 795-797 (NYK) the chain is on the extracellular side. A helical membrane pass occupies residues 798–819 (IITMCFSVSLSATVALGCMFVP). Over 820-1203 (KVYIILAKPE…RDYTQSSSSL (384 aa)) the chain is Cytoplasmic. A Phosphoserine modification is found at Ser860. Omega-N-methylarginine is present on Arg868. Disordered stretches follow at residues 892-970 (FTPK…GSGP), 1003-1054 (EESF…GSLM), and 1122-1182 (GAQG…ALCI). The span at 905-920 (TMSSSNGKSVTWAQNE) shows a compositional bias: polar residues. Arg924 bears the Omega-N-methylarginine mark. Positions 1007 to 1017 (PAAARPRSPSP) are enriched in low complexity. Phosphoserine is present on residues Ser1014 and Ser1016. Polar residues-rich tracts occupy residues 1039-1054 (HSET…GSLM) and 1165-1176 (DSGSTTPNSPVS).

The protein belongs to the G-protein coupled receptor 3 family. Interacts with RYR1, RYR2, ITPR1, SHANK1 and SHANK3. The PPXXF motif binds HOMER1, HOMER2 and HOMER3. Interacts with SIAH1 and TAMALIN. Interacts with NCDN. Interacts with NECAB2. Interacts with CAMK2A. Widely distributed in neuronal cells of the central nervous system.

The protein resides in the cell membrane. Functionally, G-protein coupled receptor for glutamate. Ligand binding causes a conformation change that triggers signaling via guanine nucleotide-binding proteins (G proteins) and modulates the activity of down-stream effectors. Signaling activates a phosphatidylinositol-calcium second messenger system and generates a calcium-activated chloride current. Plays an important role in the regulation of synaptic plasticity and the modulation of the neural network activity. This chain is Metabotropic glutamate receptor 5 (Grm5), found in Rattus norvegicus (Rat).